The chain runs to 433 residues: 3-phosphoshikimate 1-carboxyvinyltransferase (433 aa).

3-phosphoshikimate is bound by residues Lys22, Ser23, and Arg27. Residue Lys22 participates in phosphoenolpyruvate binding. The phosphoenolpyruvate site is built by Gly95 and Arg123. 3-phosphoshikimate is bound by residues Ser167, Gln169, Asp315, and Lys342. Residue Gln169 participates in phosphoenolpyruvate binding. Asp315 acts as the Proton acceptor in catalysis. Phosphoenolpyruvate is bound by residues Arg346 and Arg387.

Belongs to the EPSP synthase family. In terms of assembly, monomer.

Its subcellular location is the cytoplasm. It carries out the reaction 3-phosphoshikimate + phosphoenolpyruvate = 5-O-(1-carboxyvinyl)-3-phosphoshikimate + phosphate. It functions in the pathway metabolic intermediate biosynthesis; chorismate biosynthesis; chorismate from D-erythrose 4-phosphate and phosphoenolpyruvate: step 6/7. Catalyzes the transfer of the enolpyruvyl moiety of phosphoenolpyruvate (PEP) to the 5-hydroxyl of shikimate-3-phosphate (S3P) to produce enolpyruvyl shikimate-3-phosphate and inorganic phosphate. The chain is 3-phosphoshikimate 1-carboxyvinyltransferase from Legionella pneumophila (strain Lens).